The primary structure comprises 67 residues: Large ribosomal subunit protein bL35 (67 aa).

This sequence belongs to the bacterial ribosomal protein bL35 family.

This is Large ribosomal subunit protein bL35 from Dehalococcoides mccartyi (strain ATCC BAA-2266 / KCTC 15142 / 195) (Dehalococcoides ethenogenes (strain 195)).